Reading from the N-terminus, the 240-residue chain is Keratinocyte-associated protein 3 (240 aa).

4 helical membrane-spanning segments follow: residues 21–41 (VGLALILVGHVNLLLGAVLHG), 63–83 (VISVGSGLLSVSLGLVALLAS), 95–115 (LLALALVNLLLSAACSLGLLL), and 163–183 (ALALWIPSVFMSAAEAALSGY).

The protein belongs to the TMEM54 family.

It localises to the membrane. This Bos taurus (Bovine) protein is Keratinocyte-associated protein 3 (KRTCAP3).